The following is a 224-amino-acid chain: Small ribosomal subunit protein uS2 (224 aa).

The span at 1–14 shows a compositional bias: basic and acidic residues; sequence MAEAKPAPEKEAAV. The interval 1 to 32 is disordered; sequence MAEAKPAPEKEAAVKTESVPVADDEAASAKEG.

Belongs to the universal ribosomal protein uS2 family.

In Methanosarcina mazei (strain ATCC BAA-159 / DSM 3647 / Goe1 / Go1 / JCM 11833 / OCM 88) (Methanosarcina frisia), this protein is Small ribosomal subunit protein uS2.